We begin with the raw amino-acid sequence, 238 residues long: Ubiquinone biosynthesis O-methyltransferase (238 aa).

S-adenosyl-L-methionine-binding residues include Arg-38, Gly-58, Asp-79, and Met-124.

The protein belongs to the methyltransferase superfamily. UbiG/COQ3 family.

It catalyses the reaction a 3-demethylubiquinol + S-adenosyl-L-methionine = a ubiquinol + S-adenosyl-L-homocysteine + H(+). It carries out the reaction a 3-(all-trans-polyprenyl)benzene-1,2-diol + S-adenosyl-L-methionine = a 2-methoxy-6-(all-trans-polyprenyl)phenol + S-adenosyl-L-homocysteine + H(+). It participates in cofactor biosynthesis; ubiquinone biosynthesis. Functionally, O-methyltransferase that catalyzes the 2 O-methylation steps in the ubiquinone biosynthetic pathway. This chain is Ubiquinone biosynthesis O-methyltransferase, found in Acinetobacter baylyi (strain ATCC 33305 / BD413 / ADP1).